The sequence spans 956 residues: Bifunctional glutamine synthetase adenylyltransferase/adenylyl-removing enzyme (956 aa).

The segment at 1–441 (MLPLSTPLLA…IFTQLIGDDS (441 aa)) is adenylyl removase. The segment at 450 to 956 (HVPFKSLWLE…RRSWQQWLGE (507 aa)) is adenylyl transferase.

Belongs to the GlnE family. Mg(2+) serves as cofactor.

The enzyme catalyses [glutamine synthetase]-O(4)-(5'-adenylyl)-L-tyrosine + phosphate = [glutamine synthetase]-L-tyrosine + ADP. The catalysed reaction is [glutamine synthetase]-L-tyrosine + ATP = [glutamine synthetase]-O(4)-(5'-adenylyl)-L-tyrosine + diphosphate. Involved in the regulation of glutamine synthetase GlnA, a key enzyme in the process to assimilate ammonia. When cellular nitrogen levels are high, the C-terminal adenylyl transferase (AT) inactivates GlnA by covalent transfer of an adenylyl group from ATP to specific tyrosine residue of GlnA, thus reducing its activity. Conversely, when nitrogen levels are low, the N-terminal adenylyl removase (AR) activates GlnA by removing the adenylyl group by phosphorolysis, increasing its activity. The regulatory region of GlnE binds the signal transduction protein PII (GlnB) which indicates the nitrogen status of the cell. This is Bifunctional glutamine synthetase adenylyltransferase/adenylyl-removing enzyme from Photorhabdus laumondii subsp. laumondii (strain DSM 15139 / CIP 105565 / TT01) (Photorhabdus luminescens subsp. laumondii).